Here is a 481-residue protein sequence, read N- to C-terminus: Zygotic gap protein knirps (481 aa).

A DNA-binding region (nuclear receptor) is located at residues 2-78 (NQTCKVCGEP…VGMSKGGSRY (77 aa)). 2 NR C4-type zinc fingers span residues 5 to 25 (CKVCGEPAAGFHFGAFTCEGC) and 42 to 66 (CKNDGKCIIDKKNRTTCKACRLRKC). 5 stretches are compositionally biased toward low complexity: residues 100–111 (AAAGKAPGHATG), 127–148 (QQQQQQHQQQQQQQHQHQQQQQ), 245–264 (TPPTVATVPQQSQPQPAASP), 316–335 (SHSSSASPTPSKSQSSSPLS), and 420–440 (TTNSCSSSTSTSSSNSSTSST). Disordered regions lie at residues 100 to 161 (AAAG…GYTG), 231 to 294 (SVDS…PHTI), 308 to 336 (LLPGLTTASHSSSASPTPSKSQSSSPLSF), and 420 to 442 (TTNSCSSSTSTSSSNSSTSSTEA).

The protein belongs to the nuclear hormone receptor family. NR0 subfamily.

The protein localises to the nucleus. Its function is as follows. Transcriptional repressor. Binds to multiple sites in the eve stripe 3 enhancer element. Plays an essential role in the segmentation process both by refining the expression patterns of gap genes and by establishing pair-rules stripes of gene expression. This Drosophila virilis (Fruit fly) protein is Zygotic gap protein knirps (kni).